The chain runs to 361 residues: Lipoyl synthase 1, chloroplastic (361 aa).

Residues C87, C92, C98, C124, C128, C131, and S339 each contribute to the [4Fe-4S] cluster site. The 222-residue stretch at G107–R328 folds into the Radical SAM core domain.

The protein belongs to the radical SAM superfamily. Lipoyl synthase family. [4Fe-4S] cluster is required as a cofactor.

It localises to the plastid. The protein resides in the chloroplast. The catalysed reaction is [[Fe-S] cluster scaffold protein carrying a second [4Fe-4S](2+) cluster] + N(6)-octanoyl-L-lysyl-[protein] + 2 oxidized [2Fe-2S]-[ferredoxin] + 2 S-adenosyl-L-methionine + 4 H(+) = [[Fe-S] cluster scaffold protein] + N(6)-[(R)-dihydrolipoyl]-L-lysyl-[protein] + 4 Fe(3+) + 2 hydrogen sulfide + 2 5'-deoxyadenosine + 2 L-methionine + 2 reduced [2Fe-2S]-[ferredoxin]. It functions in the pathway protein modification; protein lipoylation via endogenous pathway; protein N(6)-(lipoyl)lysine from octanoyl-[acyl-carrier-protein]: step 2/2. Catalyzes the radical-mediated insertion of two sulfur atoms into the C-6 and C-8 positions of the octanoyl moiety bound to the lipoyl domains of lipoate-dependent enzymes, thereby converting the octanoylated domains into lipoylated derivatives. The protein is Lipoyl synthase 1, chloroplastic of Zea mays (Maize).